The sequence spans 366 residues: Ribonuclease P protein subunit drpp30 (366 aa).

The segment at 265–366 (EDTQPTNNNI…DIDNNKRKRE (102 aa)) is disordered. Residues 275 to 290 (PHEKHINKESTGKETI) show a composition bias toward basic and acidic residues. Low complexity-rich tracts occupy residues 291–324 (PKPT…TPSI) and 333–351 (TAKS…AQKQ). Over residues 352 to 366 (GKMDIDIDNNKRKRE) the composition is skewed to basic and acidic residues.

Belongs to the eukaryotic/archaeal RNase P protein component 3 family.

The protein resides in the nucleus. The catalysed reaction is Endonucleolytic cleavage of RNA, removing 5'-extranucleotides from tRNA precursor.. Component of ribonuclease P, a protein complex that generates mature tRNA molecules by cleaving their 5'-ends. The protein is Ribonuclease P protein subunit drpp30 (drpp30) of Dictyostelium discoideum (Social amoeba).